The following is a 200-amino-acid chain: GMP synthase [glutamine-hydrolyzing] subunit A (200 aa).

Residues 3–193 (KIYVVDNGGQ…IGICASYREI (191 aa)) enclose the Glutamine amidotransferase type-1 domain. Residue Cys-80 is the Nucleophile of the active site. Residues His-167 and Glu-169 contribute to the active site.

In terms of assembly, heterodimer composed of a glutamine amidotransferase subunit (A) and a GMP-binding subunit (B).

It catalyses the reaction XMP + L-glutamine + ATP + H2O = GMP + L-glutamate + AMP + diphosphate + 2 H(+). Its pathway is purine metabolism; GMP biosynthesis; GMP from XMP (L-Gln route): step 1/1. Catalyzes the synthesis of GMP from XMP. The sequence is that of GMP synthase [glutamine-hydrolyzing] subunit A from Thermoplasma acidophilum (strain ATCC 25905 / DSM 1728 / JCM 9062 / NBRC 15155 / AMRC-C165).